We begin with the raw amino-acid sequence, 403 residues long: RILP-like protein 1 (403 aa).

Serine 7 is modified (phosphoserine). The 88-residue stretch at 10–97 folds into the RH1 domain; the sequence is AAESALEKNV…RLERMDRIEK (88 aa). At cysteine 47 the chain carries S-nitrosocysteine. Positions 76–265 form a coiled coil; sequence ELDELRLELD…GELNQNGEEE (190 aa). The region spanning 291–356 is the RH2 domain; it reads RPRFTLQELR…PQPESGIKRL (66 aa). Residues 329–348 form a disordered region; sequence EEENQIPQPPPIAHPRMSPQ.

Belongs to the RILPL family. In terms of assembly, interacts (when S-nitrosylated) with GAPDH. Interacts with RAB8A; interaction is dependent on the phosphorylation of 'Thr-72' of RAB8A. Interacts with RAB10 and RAB12; the interaction is dependent on the phosphorylation of 'Thr-73' of RAB10, and 'Ser-105' of RAB12. In terms of processing, S-nitrosylation is required for the interaction with GAPDH.

It is found in the cytoplasm. Its subcellular location is the cytosol. The protein resides in the cytoskeleton. The protein localises to the microtubule organizing center. It localises to the centrosome. It is found in the centriole. Its subcellular location is the cilium basal body. Functionally, plays a role in the regulation of cell shape and polarity. Plays a role in cellular protein transport, including protein transport away from primary cilia. Neuroprotective protein, which acts by sequestring GAPDH in the cytosol and prevent the apoptotic function of GAPDH in the nucleus. Competes with SIAH1 for binding GAPDH. Does not regulate lysosomal morphology and distribution. Binds to RAB10 following LRRK2-mediated RAB10 phosphorylation which leads to inhibition of ciliogenesis. The polypeptide is RILP-like protein 1 (RILPL1) (Bos taurus (Bovine)).